The sequence spans 459 residues: MDLDTITSISTPMGEGAIGIVRLSGPQAVEIADKLYKGKHLLNDVPSHTINYGHIIDPESKEVVEEVMVSVLRAPKTFTREDIIEINCHGGILTINRVLELTMTYGARMAEPGEFTKRAFLNGRIDLSQAEAVMDFIRSKTDRASKVAMNQIEGRLSDLIKKQRQSILEILAQVEVNIDYPEYDDVEDATTEFLLEQSKEIKQEINRLLDTGAQGKIMREGLSTVIVGKPNVGKSSMLNNLIQDNKAIVTEVAGTTRDVLEEYVNVRGVPLRLVDTAGIRETEDIVEKIGVERSRKALSQADLILFVLNNNEALTQEDYTLYEVVKNEDVIVIVNKMDLEQNIDINEVKDMIGDTPLIQTSMLKQEGIDELEIQIRDLFFGGEVQNQDMTYVSNSRHISLLKQARQTIQDAIDAAESGVPMDMVQIDLTRIWEILGEIIGETASDELIDQLFSQFCLGK.

Positions 22, 85, and 124 each coordinate (6S)-5-formyl-5,6,7,8-tetrahydrofolate. Residues 221 to 380 (GLSTVIVGKP…LEIQIRDLFF (160 aa)) enclose the TrmE-type G domain. Asparagine 231 is a K(+) binding site. Residues 231–236 (NVGKSS), 250–256 (TEVAGTT), and 275–278 (DTAG) each bind GTP. Serine 235 is a Mg(2+) binding site. Positions 250, 252, and 255 each coordinate K(+). Mg(2+) is bound at residue threonine 256. Lysine 459 is a binding site for (6S)-5-formyl-5,6,7,8-tetrahydrofolate.

This sequence belongs to the TRAFAC class TrmE-Era-EngA-EngB-Septin-like GTPase superfamily. TrmE GTPase family. Homodimer. Heterotetramer of two MnmE and two MnmG subunits. The cofactor is K(+).

The protein resides in the cytoplasm. Functionally, exhibits a very high intrinsic GTPase hydrolysis rate. Involved in the addition of a carboxymethylaminomethyl (cmnm) group at the wobble position (U34) of certain tRNAs, forming tRNA-cmnm(5)s(2)U34. The chain is tRNA modification GTPase MnmE from Staphylococcus aureus (strain MSSA476).